The chain runs to 327 residues: Phenylalanine--tRNA ligase alpha subunit (327 aa).

Glu252 contacts Mg(2+).

It belongs to the class-II aminoacyl-tRNA synthetase family. Phe-tRNA synthetase alpha subunit type 1 subfamily. As to quaternary structure, tetramer of two alpha and two beta subunits. Mg(2+) serves as cofactor.

The protein localises to the cytoplasm. The enzyme catalyses tRNA(Phe) + L-phenylalanine + ATP = L-phenylalanyl-tRNA(Phe) + AMP + diphosphate + H(+). This chain is Phenylalanine--tRNA ligase alpha subunit, found in Cronobacter sakazakii (strain ATCC BAA-894) (Enterobacter sakazakii).